The sequence spans 195 residues: dITP/XTP pyrophosphatase (195 aa).

A substrate-binding site is contributed by 8–13 (SNNQGK). Mg(2+) contacts are provided by Glu39 and Asp68. The active-site Proton acceptor is the Asp68. Substrate is bound by residues Ser69, 149–152 (FGYD), Lys172, and 177–178 (HR).

The protein belongs to the HAM1 NTPase family. Homodimer. Mg(2+) is required as a cofactor.

The catalysed reaction is XTP + H2O = XMP + diphosphate + H(+). It catalyses the reaction dITP + H2O = dIMP + diphosphate + H(+). The enzyme catalyses ITP + H2O = IMP + diphosphate + H(+). Functionally, pyrophosphatase that catalyzes the hydrolysis of nucleoside triphosphates to their monophosphate derivatives, with a high preference for the non-canonical purine nucleotides XTP (xanthosine triphosphate), dITP (deoxyinosine triphosphate) and ITP. Seems to function as a house-cleaning enzyme that removes non-canonical purine nucleotides from the nucleotide pool, thus preventing their incorporation into DNA/RNA and avoiding chromosomal lesions. In Staphylococcus aureus (strain MRSA252), this protein is dITP/XTP pyrophosphatase.